A 247-amino-acid polypeptide reads, in one-letter code: tRNA pseudouridine synthase A 1 (247 aa).

Asp53 serves as the catalytic Nucleophile. Position 111 (Tyr111) interacts with substrate.

Belongs to the tRNA pseudouridine synthase TruA family. Homodimer.

It carries out the reaction uridine(38/39/40) in tRNA = pseudouridine(38/39/40) in tRNA. Formation of pseudouridine at positions 38, 39 and 40 in the anticodon stem and loop of transfer RNAs. This Bacillus cereus (strain ATCC 10987 / NRS 248) protein is tRNA pseudouridine synthase A 1.